The chain runs to 432 residues: ATP-dependent RNA helicase RhlB (432 aa).

The Q motif signature appears at 9–37 (QNFADLGLQPQVIDGLNAKGFIKCTPIQA). The Helicase ATP-binding domain maps to 40 to 219 (LPVLLAGQDI…FEHMQEPEHV (180 aa)). 53-60 (AQTGTGKT) contributes to the ATP binding site. Positions 165–168 (DEAD) match the DEAD box motif. A Helicase C-terminal domain is found at 245-390 (ALLQTLIEEE…QSDYDASALL (146 aa)). Residues 397–432 (LRLQRRPQQNRRNNNGQRQGGNRKHSRPRQPRNTQS) are disordered. The span at 417-426 (GNRKHSRPRQ) shows a compositional bias: basic residues.

The protein belongs to the DEAD box helicase family. RhlB subfamily. In terms of assembly, component of the RNA degradosome, which is a multiprotein complex involved in RNA processing and mRNA degradation.

The protein resides in the cytoplasm. It carries out the reaction ATP + H2O = ADP + phosphate + H(+). In terms of biological role, DEAD-box RNA helicase involved in RNA degradation. Has RNA-dependent ATPase activity and unwinds double-stranded RNA. In Aliivibrio fischeri (strain MJ11) (Vibrio fischeri), this protein is ATP-dependent RNA helicase RhlB.